A 257-amino-acid polypeptide reads, in one-letter code: Major prion protein (257 aa).

An N-terminal signal peptide occupies residues 1–24; sequence MVKSHIGSWLLVLFVATWSDIGFC. The tract at residues 25–234 is interaction with GRB2, ERI3 and SYN1; the sequence is KKRPKPGGGW…ESEAYYQRGA (210 aa). A disordered region spans residues 27 to 114; it reads RPKPGGGWNT…KPSKPKTNMK (88 aa). 5 repeat units span residues 54-62, 63-70, 71-78, 79-86, and 87-95. The interval 54-95 is 5 X 8 AA tandem repeats of P-H-G-G-G-W-G-Q; sequence PQGGGGWGQPHGGGWGQPHGGGWGQPHGGGWGQPHGGGGWGQ. The span at 55–101 shows a compositional bias: gly residues; sequence QGGGGWGQPHGGGWGQPHGGGWGQPHGGGWGQPHGGGGWGQGGGSHG. Residues H64, G65, G66, H72, G73, G74, H80, G81, G82, H88, G90, and G91 each contribute to the Cu(2+) site. Cysteines 183 and 218 form a disulfide. N-linked (GlcNAc...) asparagine glycosylation is found at N185 and N201. The GPI-anchor amidated alanine moiety is linked to residue A234. Residues 235–257 constitute a propeptide, removed in mature form; that stretch reads SAILFSPPPVILLISLLILLIVG.

Belongs to the prion family. Monomer and homodimer. Has a tendency to aggregate into amyloid fibrils containing a cross-beta spine, formed by a steric zipper of superposed beta-strands. Soluble oligomers may represent an intermediate stage on the path to fibril formation. Copper binding may promote oligomerization. Interacts with GRB2, APP, ERI3/PRNPIP and SYN1. Mislocalized cytosolically exposed PrP interacts with MGRN1; this interaction alters MGRN1 subcellular location and causes lysosomal enlargement. Interacts with KIAA1191.

The protein resides in the cell membrane. Its subcellular location is the golgi apparatus. Its function is as follows. Its primary physiological function is unclear. Has cytoprotective activity against internal or environmental stresses. May play a role in neuronal development and synaptic plasticity. May be required for neuronal myelin sheath maintenance. May play a role in iron uptake and iron homeostasis. Soluble oligomers are toxic to cultured neuroblastoma cells and induce apoptosis (in vitro). Association with GPC1 (via its heparan sulfate chains) targets PRNP to lipid rafts. Also provides Cu(2+) or Zn(2+) for the ascorbate-mediated GPC1 deaminase degradation of its heparan sulfate side chains. The polypeptide is Major prion protein (PRNP) (Mustela putorius furo (European domestic ferret)).